Here is a 396-residue protein sequence, read N- to C-terminus: Pectinesterase (396 aa).

A signal peptide spans 1–21 (MQSKTLYLKATALLGGCTVFA). Threonine 174 serves as a coordination point for substrate. The active-site Proton donor is the aspartate 232. Aspartate 259 serves as the catalytic Nucleophile. 2 residues coordinate substrate: arginine 324 and tryptophan 326.

It belongs to the pectinesterase family.

The protein resides in the secreted. The enzyme catalyses [(1-&gt;4)-alpha-D-galacturonosyl methyl ester](n) + n H2O = [(1-&gt;4)-alpha-D-galacturonosyl](n) + n methanol + n H(+). The protein operates within glycan metabolism; pectin degradation; 2-dehydro-3-deoxy-D-gluconate from pectin: step 1/5. In terms of biological role, involved in maceration and soft-rotting of plant tissue. This is Pectinesterase (pme) from Ralstonia nicotianae (strain ATCC BAA-1114 / GMI1000) (Ralstonia solanacearum).